The chain runs to 89 residues: Exodeoxyribonuclease 7 small subunit (89 aa).

A disordered region spans residues 1-22 (MRKKSSSNKEETALHPPPENFE).

The protein belongs to the XseB family. In terms of assembly, heterooligomer composed of large and small subunits.

It localises to the cytoplasm. It catalyses the reaction Exonucleolytic cleavage in either 5'- to 3'- or 3'- to 5'-direction to yield nucleoside 5'-phosphates.. Bidirectionally degrades single-stranded DNA into large acid-insoluble oligonucleotides, which are then degraded further into small acid-soluble oligonucleotides. This Nitrosomonas europaea (strain ATCC 19718 / CIP 103999 / KCTC 2705 / NBRC 14298) protein is Exodeoxyribonuclease 7 small subunit.